A 230-amino-acid chain; its full sequence is Ribonuclease 1 (230 aa).

A signal peptide spans 1–22 (MKILLASLCLISLLVILPSVFS). Gln-38 lines the RNA pocket. Cysteines 44 and 50 form a disulfide. Residues His-65, Phe-115, 118-119 (HE), and 122-123 (KH) each bind RNA. The active-site Proton donor is the His-65. Cystine bridges form between Cys-80-Cys-126, Cys-186-Cys-221, and Cys-202-Cys-213. The active site involves Glu-119. Catalysis depends on His-123, which acts as the Proton acceptor.

Belongs to the RNase T2 family.

It carries out the reaction a ribonucleotidyl-ribonucleotide-RNA + H2O = a 3'-end 3'-phospho-ribonucleotide-RNA + a 5'-end dephospho-ribonucleoside-RNA + H(+). Its function is as follows. May remobilize phosphate, particularly when cells senesce or when phosphate becomes limiting. In Arabidopsis thaliana (Mouse-ear cress), this protein is Ribonuclease 1 (RNS1).